Consider the following 697-residue polypeptide: Elongation factor G (697 aa).

Residues Glu6–Ile281 form the tr-type G domain. Residues Ala15–Thr22, Asp79–His83, and Asn133–Asp136 each bind GTP.

This sequence belongs to the TRAFAC class translation factor GTPase superfamily. Classic translation factor GTPase family. EF-G/EF-2 subfamily.

Its subcellular location is the cytoplasm. Its function is as follows. Catalyzes the GTP-dependent ribosomal translocation step during translation elongation. During this step, the ribosome changes from the pre-translocational (PRE) to the post-translocational (POST) state as the newly formed A-site-bound peptidyl-tRNA and P-site-bound deacylated tRNA move to the P and E sites, respectively. Catalyzes the coordinated movement of the two tRNA molecules, the mRNA and conformational changes in the ribosome. This is Elongation factor G from Rickettsia bellii (strain OSU 85-389).